A 474-amino-acid polypeptide reads, in one-letter code: Aspartyl/glutamyl-tRNA(Asn/Gln) amidotransferase subunit B (474 aa).

It belongs to the GatB/GatE family. GatB subfamily. In terms of assembly, heterotrimer of A, B and C subunits.

It catalyses the reaction L-glutamyl-tRNA(Gln) + L-glutamine + ATP + H2O = L-glutaminyl-tRNA(Gln) + L-glutamate + ADP + phosphate + H(+). The catalysed reaction is L-aspartyl-tRNA(Asn) + L-glutamine + ATP + H2O = L-asparaginyl-tRNA(Asn) + L-glutamate + ADP + phosphate + 2 H(+). In terms of biological role, allows the formation of correctly charged Asn-tRNA(Asn) or Gln-tRNA(Gln) through the transamidation of misacylated Asp-tRNA(Asn) or Glu-tRNA(Gln) in organisms which lack either or both of asparaginyl-tRNA or glutaminyl-tRNA synthetases. The reaction takes place in the presence of glutamine and ATP through an activated phospho-Asp-tRNA(Asn) or phospho-Glu-tRNA(Gln). This Desulfotalea psychrophila (strain LSv54 / DSM 12343) protein is Aspartyl/glutamyl-tRNA(Asn/Gln) amidotransferase subunit B.